The following is a 166-amino-acid chain: UPF0304 protein VP0990 (166 aa).

The protein belongs to the UPF0304 family.

The polypeptide is UPF0304 protein VP0990 (Vibrio parahaemolyticus serotype O3:K6 (strain RIMD 2210633)).